A 436-amino-acid chain; its full sequence is Bifunctional protein GlmU (436 aa).

The pyrophosphorylase stretch occupies residues 1–225; it reads MNNNTSIIIL…EQNFMGINDK (225 aa). Residues 10-13, Lys24, Gln76, and 83-84 each bind UDP-N-acetyl-alpha-D-glucosamine; these read LAAG and GT. Residue Asp104 participates in Mg(2+) binding. The UDP-N-acetyl-alpha-D-glucosamine site is built by Gly137, Glu151, Asn166, and Asn223. Residue Asn223 coordinates Mg(2+). Residues 226–246 are linker; that stretch reads FQLSIAEKIMQDEIKQNLMKA. The interval 247 to 436 is N-acetyltransferase; sequence GVLMRMPESI…KFFGKDDVKK (190 aa). Residues Arg310 and Lys327 each coordinate UDP-N-acetyl-alpha-D-glucosamine. His338 (proton acceptor) is an active-site residue. Residues Tyr341 and Asn352 each coordinate UDP-N-acetyl-alpha-D-glucosamine. Acetyl-CoA is bound by residues 361-362, Ser380, Ala398, and Arg415; that span reads NY.

It in the N-terminal section; belongs to the N-acetylglucosamine-1-phosphate uridyltransferase family. In the C-terminal section; belongs to the transferase hexapeptide repeat family. In terms of assembly, homotrimer. The cofactor is Mg(2+).

It is found in the cytoplasm. It carries out the reaction alpha-D-glucosamine 1-phosphate + acetyl-CoA = N-acetyl-alpha-D-glucosamine 1-phosphate + CoA + H(+). The catalysed reaction is N-acetyl-alpha-D-glucosamine 1-phosphate + UTP + H(+) = UDP-N-acetyl-alpha-D-glucosamine + diphosphate. The protein operates within nucleotide-sugar biosynthesis; UDP-N-acetyl-alpha-D-glucosamine biosynthesis; N-acetyl-alpha-D-glucosamine 1-phosphate from alpha-D-glucosamine 6-phosphate (route II): step 2/2. It participates in nucleotide-sugar biosynthesis; UDP-N-acetyl-alpha-D-glucosamine biosynthesis; UDP-N-acetyl-alpha-D-glucosamine from N-acetyl-alpha-D-glucosamine 1-phosphate: step 1/1. It functions in the pathway bacterial outer membrane biogenesis; LPS lipid A biosynthesis. Its function is as follows. Catalyzes the last two sequential reactions in the de novo biosynthetic pathway for UDP-N-acetylglucosamine (UDP-GlcNAc). The C-terminal domain catalyzes the transfer of acetyl group from acetyl coenzyme A to glucosamine-1-phosphate (GlcN-1-P) to produce N-acetylglucosamine-1-phosphate (GlcNAc-1-P), which is converted into UDP-GlcNAc by the transfer of uridine 5-monophosphate (from uridine 5-triphosphate), a reaction catalyzed by the N-terminal domain. In Campylobacter concisus (strain 13826), this protein is Bifunctional protein GlmU.